A 251-amino-acid chain; its full sequence is uncharacterized protein (251 aa).

Residues 1–22 are disordered; sequence MTQLPELGLRSPNNKSPTGPHP.

This is an uncharacterized protein from Homo sapiens (Human).